The primary structure comprises 359 residues: MMACCLRNKRRMKGKLSWKSKKRDLSHSGNWAPEDDNDEGKIVFFGGSNYTFDLDDLLAASAEILGKGAHVTTYKVAVEDTATVVVKRLEEVVVGRREFEQQMEIVGRIRHDNVAELKAYYYSKIDKLAVYSYYSQGNLFEMLHGKLSFCIPLSMLLWYAVSKTNNSTFAGESQVPLDWESRLRIAIGAARGLAIIHEADDGKFVHGNIKSSNIFTNSKCYGCICDLGLTHITKSLPQTTLRSSGYHAPEITDTRKSTQFSDVYSFGVVLLELLTGKSPASPLSLDENMDLASWIRSVVSKEWTGEVFDNELMMQMGIEEELVEMLQIGLACVALKPQDRPHITHIVKLIQDIPTNFNL.

In terms of domain architecture, Protein kinase spans 59–357 (AASAEILGKG…KLIQDIPTNF (299 aa)). ATP-binding positions include 65–73 (LGKGAHVTT) and lysine 87.

It belongs to the protein kinase superfamily. Ser/Thr protein kinase family.

The polypeptide is Probably inactive receptor-like protein kinase At5g41680 (Arabidopsis thaliana (Mouse-ear cress)).